The chain runs to 67 residues: DNA-directed RNA polymerase subunit omega (67 aa).

This sequence belongs to the RNA polymerase subunit omega family. The RNAP catalytic core consists of 2 alpha, 1 beta, 1 beta' and 1 omega subunit. When a sigma factor is associated with the core the holoenzyme is formed, which can initiate transcription.

It catalyses the reaction RNA(n) + a ribonucleoside 5'-triphosphate = RNA(n+1) + diphosphate. Functionally, promotes RNA polymerase assembly. Latches the N- and C-terminal regions of the beta' subunit thereby facilitating its interaction with the beta and alpha subunits. This is DNA-directed RNA polymerase subunit omega from Legionella pneumophila (strain Paris).